The following is a 144-amino-acid chain: Large ribosomal subunit protein uL15 (144 aa).

The segment at 1-52 (MRLNSLSPAEGAKHSAKRLGRGISSGLGKTGGRGHKGQKSRTGGGVRRGFEG) is disordered.

It belongs to the universal ribosomal protein uL15 family. Part of the 50S ribosomal subunit.

Binds to the 23S rRNA. The protein is Large ribosomal subunit protein uL15 of Actinobacillus pleuropneumoniae serotype 7 (strain AP76).